The sequence spans 494 residues: Argininosuccinate lyase (494 aa).

It belongs to the lyase 1 family. Argininosuccinate lyase subfamily.

The protein resides in the cytoplasm. The catalysed reaction is 2-(N(omega)-L-arginino)succinate = fumarate + L-arginine. It participates in amino-acid biosynthesis; L-arginine biosynthesis; L-arginine from L-ornithine and carbamoyl phosphate: step 3/3. This Methanosphaerula palustris (strain ATCC BAA-1556 / DSM 19958 / E1-9c) protein is Argininosuccinate lyase.